Here is a 572-residue protein sequence, read N- to C-terminus: MRTSQYLLSTLKETPADAEVISHQLMLRAGMIRKLASGLYTWLPTGVRVLKKVENIVREEMNNAGAIEVSMPVVQPADLWQESGRWEQYGPELLRFVDRGERPFVLGPTHEEVITDLIRGEINSYKQLPLNFFQIQTKFRDEVRPRFGVMRAREFLMKDAYSFHTTQESLQETYDAMYAAYSKIFERMDLNFRAVLADTGSIGGSASHEFQVLADSGEDDIVFSTESDYAANIEFAEALAPSAPRAVATEDLRIIDTPNAKTIAELVEQFNLPIEKTVKTLMVHAHEESGHKLVALLVRGDHELNEIKAEKLPQVAKPLTFATEEEIRAIIGAGPGSLGPVNLPLPVVVDRSVAVMSDFGAGANIDGKHYFGINWERDLPLPQVADLRNVVEGDISPDGKGTLQIKRGIEVGHIFQLGTKYSEAMKATVQGEDGRNQVMTMGCYGIGVSRVVAAAIEQNHDERGIIWPDAIAPFQVAILPMNMHKSFRVQALAEELYATLRSHGIDVILDDRKERPGVMFADMELIGVPHNIVIGDRNLDSEEVEYKNRRAGEKQMIKTSEIIDFLLSQIKR.

This sequence belongs to the class-II aminoacyl-tRNA synthetase family. ProS type 1 subfamily. Homodimer.

It localises to the cytoplasm. The enzyme catalyses tRNA(Pro) + L-proline + ATP = L-prolyl-tRNA(Pro) + AMP + diphosphate. Functionally, catalyzes the attachment of proline to tRNA(Pro) in a two-step reaction: proline is first activated by ATP to form Pro-AMP and then transferred to the acceptor end of tRNA(Pro). As ProRS can inadvertently accommodate and process non-cognate amino acids such as alanine and cysteine, to avoid such errors it has two additional distinct editing activities against alanine. One activity is designated as 'pretransfer' editing and involves the tRNA(Pro)-independent hydrolysis of activated Ala-AMP. The other activity is designated 'posttransfer' editing and involves deacylation of mischarged Ala-tRNA(Pro). The misacylated Cys-tRNA(Pro) is not edited by ProRS. The sequence is that of Proline--tRNA ligase from Yersinia enterocolitica serotype O:8 / biotype 1B (strain NCTC 13174 / 8081).